Reading from the N-terminus, the 216-residue chain is Protein fmp32, mitochondrial (216 aa).

The stretch at 111 to 133 forms a coiled coil; the sequence is RQEMVALHSQVEQLFSDVERLKT. A helical transmembrane segment spans residues 193–215; the sequence is TLQWVFGIVTGSGALLLAYVRLI.

Belongs to the CCDC90 family.

The protein resides in the mitochondrion. It is found in the membrane. This Schizosaccharomyces pombe (strain 972 / ATCC 24843) (Fission yeast) protein is Protein fmp32, mitochondrial (fmp32).